The sequence spans 151 residues: Large ribosomal subunit protein uL15 (151 aa).

The tract at residues 1 to 57 is disordered; sequence MTLRLDSLKANKGARRRKLRKGRGIAAGQGASCGFGMRGQKSRSGRPTRPGFEGGQM. The span at 12–23 shows a compositional bias: basic residues; it reads KGARRRKLRKGR. A compositionally biased stretch (gly residues) spans 25 to 37; it reads IAAGQGASCGFGM.

Belongs to the universal ribosomal protein uL15 family. In terms of assembly, part of the 50S ribosomal subunit.

Binds to the 23S rRNA. This is Large ribosomal subunit protein uL15 from Synechococcus sp. (strain CC9902).